Reading from the N-terminus, the 147-residue chain is Neocarzinostatin (147 aa).

The first 34 residues, 1–34 (MVPISIIRNRVAKVAVGSAAVLGLAVGFQTPAVA), serve as a signal peptide directing secretion. Cystine bridges form between Cys-71/Cys-81 and Cys-122/Cys-127.

Belongs to the neocarzinostatin family.

NCS has antibiotic activity (for Gram-positive bacteria) and antitumor activity (for certain mouse tumors). NCS binds non-covalently to a chromophore which is the cytotoxic and mutagenic component of the antibiotic. The chromophore binds to DNA as a weak intercalator and causes single- and double-strand breaks. This Streptomyces carzinostaticus protein is Neocarzinostatin (ncsA).